Consider the following 599-residue polypeptide: MRIDQSIINEIKDKTDILDLVSEYVKLEKRGRNYIGLCPFHDEKTPSFTVSEDKQICHCFGCKKGGNVFQFTQEIKDISFVEAVKELGDRVNVAVDIEATQSNSNVQIASDDLQMIEMHELIQEFYYYALTKTVEGEQALTYLQERGFTDALIKERGIGFAPDSSHFCHDFLQKKGYDIELAYEAGLLSRNEENFSYYDRFRNRIMFPLKNAQGRIVGYSGRTYTGQEPKYLNSPETPIFQKRKLLYNLDKARKSIRKLDEIVLLEGFMDVIKSDTAGLKNVVATMGTQLSDEHITFIRKLTSNITLMFDGDFAGSEATLKTGQHLLQQGLNVFVIQLPSGMDPDEYIGKYGNDAFTAFVKNDKKSFAHYKVSILKDEIAHNDLSYERYLKELSHDISLMKSSILQQKALNDVAPFFNVSPEQLANEIQFNQAPANYYPEDEYGGYIEPEPIGMAQFDNLSRQEKAERAFLKHLMRDKDTFLNYYESVDKDNFTNQHFKYVFEVLHDFYAENDQYNISDAVQYVNSNELRETLISLEQYSLNDEPYENEIDDYVNVINENGQETIESLNHKLREATRIGDVELQKYYLQQIVAKNKERM.

The CHC2-type zinc-finger motif lies at 38-62 (CPFHDEKTPSFTVSEDKQICHCFGC). Residues 260-341 (DEIVLLEGFM…NVFVIQLPSG (82 aa)) form the Toprim domain. Positions 266, 310, and 312 each coordinate Mg(2+).

Belongs to the DnaG primase family. As to quaternary structure, monomer. Interacts with DnaB. It depends on Zn(2+) as a cofactor. Mg(2+) serves as cofactor.

The enzyme catalyses ssDNA + n NTP = ssDNA/pppN(pN)n-1 hybrid + (n-1) diphosphate.. RNA polymerase that catalyzes the synthesis of short RNA molecules used as primers for DNA polymerase during DNA replication. This Staphylococcus aureus (strain MRSA252) protein is DNA primase.